Consider the following 381-residue polypeptide: Sulfofructose kinase (381 aa).

ATP contacts are provided by residues glycine 10, 72–73 (RY), and 100–103 (GNGT). Asparagine 101 is a binding site for Mg(2+). Aspartate 131 serves as the catalytic Proton acceptor.

It belongs to the phosphofructokinase type A (PFKA) family. Requires Mg(2+) as cofactor.

The catalysed reaction is 6-deoxy-6-sulfo-D-fructose + ATP = 6-deoxy-6-sulfo-D-fructose 1-phosphate + ADP + H(+). Part of the sulfo-EMP2 pathway, a D-sulfoquinovose degradation pathway that produces sulfolactate (SL). Phosphorylates 6-deoxy-6-sulfo-D-fructose (SF) to 6-deoxy-6-sulfo-D-fructose 1-phosphate (SFP). In Alkalicoccus urumqiensis (Bacillus urumqiensis), this protein is Sulfofructose kinase.